We begin with the raw amino-acid sequence, 292 residues long: Elongation factor Ts (292 aa).

Residues 80–83 (TDFV) are involved in Mg(2+) ion dislocation from EF-Tu.

Belongs to the EF-Ts family.

The protein resides in the cytoplasm. In terms of biological role, associates with the EF-Tu.GDP complex and induces the exchange of GDP to GTP. It remains bound to the aminoacyl-tRNA.EF-Tu.GTP complex up to the GTP hydrolysis stage on the ribosome. This chain is Elongation factor Ts, found in Cupriavidus necator (strain ATCC 17699 / DSM 428 / KCTC 22496 / NCIMB 10442 / H16 / Stanier 337) (Ralstonia eutropha).